The chain runs to 153 residues: Aspartate carbamoyltransferase regulatory chain (153 aa).

Positions 110, 115, 138, and 141 each coordinate Zn(2+).

The protein belongs to the PyrI family. In terms of assembly, contains catalytic and regulatory chains. The cofactor is Zn(2+).

Functionally, involved in allosteric regulation of aspartate carbamoyltransferase. This chain is Aspartate carbamoyltransferase regulatory chain, found in Bacteroides thetaiotaomicron (strain ATCC 29148 / DSM 2079 / JCM 5827 / CCUG 10774 / NCTC 10582 / VPI-5482 / E50).